A 675-amino-acid polypeptide reads, in one-letter code: Mitochondrial distribution and morphology protein 12 (675 aa).

Residues methionine 1–valine 675 enclose the SMP-LTD domain. Disordered stretches follow at residues leucine 66 to histidine 186, glycine 241 to glycine 270, glycine 307 to threonine 327, threonine 365 to alanine 390, and proline 444 to glutamate 517. Over residues serine 78 to valine 101 the composition is skewed to acidic residues. Residues asparagine 123–glycine 137 show a composition bias toward low complexity. Residues glycine 261–glycine 270 show a composition bias toward gly residues. The segment covering proline 317 to threonine 327 has biased composition (low complexity). Polar residues-rich tracts occupy residues proline 373–glycine 382 and valine 454–alanine 469. The span at glutamate 497–glutamate 510 shows a compositional bias: acidic residues.

This sequence belongs to the MDM12 family. As to quaternary structure, component of the ER-mitochondria encounter structure (ERMES) or MDM complex, composed of mmm-1, mdm10, mdm12 and mdm34. A mmm-1 homodimer associates with one molecule of mdm12 on each side in a pairwise head-to-tail manner, and the SMP-LTD domains of mmm-1 and mdm12 generate a continuous hydrophobic tunnel for phospholipid trafficking.

It is found in the mitochondrion outer membrane. The protein resides in the endoplasmic reticulum membrane. Component of the ERMES/MDM complex, which serves as a molecular tether to connect the endoplasmic reticulum (ER) and mitochondria. Components of this complex are involved in the control of mitochondrial shape and protein biogenesis, and function in nonvesicular lipid trafficking between the ER and mitochondria. Mdm12 is required for the interaction of the ER-resident membrane protein MMM1 and the outer mitochondrial membrane-resident beta-barrel protein mdm10. The mdm12-mmm-1 subcomplex functions in the major beta-barrel assembly pathway that is responsible for biogenesis of all mitochondrial outer membrane beta-barrel proteins, and acts in a late step after the SAM complex. The mdm10-mdm12-mmm-1 subcomplex further acts in the TOM40-specific pathway after the action of the mdm12-mmm1 complex. Essential for establishing and maintaining the structure of mitochondria and maintenance of mtDNA nucleoids. This chain is Mitochondrial distribution and morphology protein 12, found in Neurospora crassa (strain ATCC 24698 / 74-OR23-1A / CBS 708.71 / DSM 1257 / FGSC 987).